The primary structure comprises 388 residues: Succinate--CoA ligase [ADP-forming] subunit beta (388 aa).

The ATP-grasp domain occupies 9–244 (KQLFARYGLP…PSQEDSREAH (236 aa)). ATP contacts are provided by residues K46, 53–55 (GRG), E99, T102, and E107. The Mg(2+) site is built by N199 and D213. Substrate is bound by residues N264 and 321 to 323 (GIV).

This sequence belongs to the succinate/malate CoA ligase beta subunit family. As to quaternary structure, heterotetramer of two alpha and two beta subunits. Mg(2+) serves as cofactor.

The catalysed reaction is succinate + ATP + CoA = succinyl-CoA + ADP + phosphate. It catalyses the reaction GTP + succinate + CoA = succinyl-CoA + GDP + phosphate. It participates in carbohydrate metabolism; tricarboxylic acid cycle; succinate from succinyl-CoA (ligase route): step 1/1. Its function is as follows. Succinyl-CoA synthetase functions in the citric acid cycle (TCA), coupling the hydrolysis of succinyl-CoA to the synthesis of either ATP or GTP and thus represents the only step of substrate-level phosphorylation in the TCA. The beta subunit provides nucleotide specificity of the enzyme and binds the substrate succinate, while the binding sites for coenzyme A and phosphate are found in the alpha subunit. This Pectobacterium carotovorum subsp. carotovorum (strain PC1) protein is Succinate--CoA ligase [ADP-forming] subunit beta.